Consider the following 71-residue polypeptide: Small ribosomal subunit protein bS21 (71 aa).

A disordered region spans residues 40–71 (KPTQVRKRKQAAAVKRHMKRLNREQQRRQRPY). The span at 43–59 (QVRKRKQAAAVKRHMKR) shows a compositional bias: basic residues. Residues 60-71 (LNREQQRRQRPY) are compositionally biased toward basic and acidic residues.

It belongs to the bacterial ribosomal protein bS21 family.

The sequence is that of Small ribosomal subunit protein bS21 from Halorhodospira halophila (strain DSM 244 / SL1) (Ectothiorhodospira halophila (strain DSM 244 / SL1)).